The following is a 224-amino-acid chain: Ribose-5-phosphate isomerase A (224 aa).

Substrate is bound by residues 26–29 (TGST), 81–84 (DGAD), and 94–97 (KGGG). Catalysis depends on Glu-103, which acts as the Proton acceptor. Position 121 (Lys-121) interacts with substrate.

It belongs to the ribose 5-phosphate isomerase family. Homodimer.

It catalyses the reaction aldehydo-D-ribose 5-phosphate = D-ribulose 5-phosphate. It participates in carbohydrate degradation; pentose phosphate pathway; D-ribose 5-phosphate from D-ribulose 5-phosphate (non-oxidative stage): step 1/1. Catalyzes the reversible conversion of ribose-5-phosphate to ribulose 5-phosphate. The chain is Ribose-5-phosphate isomerase A from Listeria monocytogenes serotype 4b (strain CLIP80459).